Reading from the N-terminus, the 217-residue chain is Probable transaldolase (217 aa).

Lys83 acts as the Schiff-base intermediate with substrate in catalysis.

It belongs to the transaldolase family. Type 3B subfamily.

It localises to the cytoplasm. The enzyme catalyses D-sedoheptulose 7-phosphate + D-glyceraldehyde 3-phosphate = D-erythrose 4-phosphate + beta-D-fructose 6-phosphate. It functions in the pathway carbohydrate degradation; pentose phosphate pathway; D-glyceraldehyde 3-phosphate and beta-D-fructose 6-phosphate from D-ribose 5-phosphate and D-xylulose 5-phosphate (non-oxidative stage): step 2/3. In terms of biological role, transaldolase is important for the balance of metabolites in the pentose-phosphate pathway. This Bartonella quintana (strain Toulouse) (Rochalimaea quintana) protein is Probable transaldolase.